A 490-amino-acid polypeptide reads, in one-letter code: GTPase Der (490 aa).

2 EngA-type G domains span residues 3 to 166 (PVVA…MEDL) and 203 to 376 (IKLA…DSST). GTP is bound by residues 9 to 16 (GRPNVGKS), 56 to 60 (DTGGI), 118 to 121 (NKTD), 209 to 216 (GRPNVGKS), 256 to 260 (DTAGV), and 321 to 324 (NKWD). The KH-like domain occupies 377–461 (RRVGTSMLTR…PIRIQFKEGE (85 aa)).

Belongs to the TRAFAC class TrmE-Era-EngA-EngB-Septin-like GTPase superfamily. EngA (Der) GTPase family. In terms of assembly, associates with the 50S ribosomal subunit.

GTPase that plays an essential role in the late steps of ribosome biogenesis. This chain is GTPase Der, found in Escherichia coli O7:K1 (strain IAI39 / ExPEC).